Here is a 232-residue protein sequence, read N- to C-terminus: 7-cyano-7-deazaguanine synthase 2 (232 aa).

Residue 9–19 (FSGGQDSTTCL) participates in ATP binding. Cysteine 189, cysteine 198, cysteine 201, and cysteine 204 together coordinate Zn(2+).

The protein belongs to the QueC family. Zn(2+) serves as cofactor.

The catalysed reaction is 7-carboxy-7-deazaguanine + NH4(+) + ATP = 7-cyano-7-deazaguanine + ADP + phosphate + H2O + H(+). It participates in purine metabolism; 7-cyano-7-deazaguanine biosynthesis. Its function is as follows. Catalyzes the ATP-dependent conversion of 7-carboxy-7-deazaguanine (CDG) to 7-cyano-7-deazaguanine (preQ(0)). The sequence is that of 7-cyano-7-deazaguanine synthase 2 from Pseudomonas fluorescens (strain ATCC BAA-477 / NRRL B-23932 / Pf-5).